Reading from the N-terminus, the 280-residue chain is Fe-S cluster assembly protein DRE2 (280 aa).

The N-terminal SAM-like domain stretch occupies residues 1–121; sequence MSNLLVFDNS…TTLLKKSGGG (121 aa). The tract at residues 122-176 is linker; the sequence is PKKFAFKRASPATAAPSTNGTNPAATVNLNSVVTLSMDDDDLMDEDDLMEDDTNL. [2Fe-2S] cluster-binding residues include cysteine 186, cysteine 198, cysteine 201, and cysteine 203. The segment at 186-203 is fe-S binding site A; the sequence is CDPGPGKKRRKACKDCTC. 4 residues coordinate [4Fe-4S] cluster: cysteine 244, cysteine 247, cysteine 255, and cysteine 258. 2 short sequence motifs (cx2C motif) span residues 244 to 247 and 255 to 258; these read CGSC and CDGC. A fe-S binding site B region spans residues 244 to 258; the sequence is CGSCALGDAFRCDGC.

This sequence belongs to the anamorsin family. In terms of assembly, monomer. Interacts with TAH18. Interacts with MIA40. It depends on [2Fe-2S] cluster as a cofactor. Requires [4Fe-4S] cluster as cofactor.

The protein resides in the cytoplasm. The protein localises to the mitochondrion intermembrane space. Its function is as follows. Component of the cytosolic iron-sulfur (Fe-S) protein assembly (CIA) machinery required for the maturation of extramitochondrial Fe-S proteins. Part of an electron transfer chain functioning in an early step of cytosolic Fe-S biogenesis, facilitating the de novo assembly of a [4Fe-4S] cluster on the scaffold complex CFD1-NBP35. Electrons are transferred to DRE2 from NADPH via the FAD- and FMN-containing protein TAH18. TAH18-DRE2 are also required for the assembly of the diferric tyrosyl radical cofactor of ribonucleotide reductase (RNR), probably by providing electrons for reduction during radical cofactor maturation in the catalytic small subunit RNR2. The protein is Fe-S cluster assembly protein DRE2 of Yarrowia lipolytica (strain CLIB 122 / E 150) (Yeast).